The sequence spans 93 residues: Molybdopterin synthase sulfur carrier subunit (93 aa).

1-thioglycine; alternate is present on G93. G93 carries the glycyl adenylate; alternate modification.

Belongs to the MoaD family. MOCS2A subfamily. As to quaternary structure, heterotetramer; composed of 2 small (MOCS2A) and 2 large (MOCS2B) subunits. C-terminal thiocarboxylation occurs in 2 steps, it is first acyl-adenylated (-COAMP) via the hesA/moeB/thiF part of uba4, then thiocarboxylated (-COSH) via the rhodanese domain of uba4.

It is found in the cytoplasm. It functions in the pathway cofactor biosynthesis; molybdopterin biosynthesis. In terms of biological role, acts as a sulfur carrier required for molybdopterin biosynthesis. Component of the molybdopterin synthase complex that catalyzes the conversion of precursor Z into molybdopterin by mediating the incorporation of 2 sulfur atoms into precursor Z to generate a dithiolene group. In the complex, serves as sulfur donor by being thiocarboxylated (-COSH) at its C-terminus by uba4. After interaction with MOCS2B, the sulfur is then transferred to precursor Z to form molybdopterin. This chain is Molybdopterin synthase sulfur carrier subunit, found in Pyrenophora tritici-repentis (strain Pt-1C-BFP) (Wheat tan spot fungus).